A 181-amino-acid chain; its full sequence is Adenine phosphoribosyltransferase (181 aa).

Belongs to the purine/pyrimidine phosphoribosyltransferase family. In terms of assembly, homodimer.

Its subcellular location is the cytoplasm. The catalysed reaction is AMP + diphosphate = 5-phospho-alpha-D-ribose 1-diphosphate + adenine. Its pathway is purine metabolism; AMP biosynthesis via salvage pathway; AMP from adenine: step 1/1. Its function is as follows. Catalyzes a salvage reaction resulting in the formation of AMP, that is energically less costly than de novo synthesis. This chain is Adenine phosphoribosyltransferase, found in Vibrio atlanticus (strain LGP32) (Vibrio splendidus (strain Mel32)).